The chain runs to 60 residues: Large ribosomal subunit protein uL30 (60 aa).

Belongs to the universal ribosomal protein uL30 family. In terms of assembly, part of the 50S ribosomal subunit.

In Lysinibacillus sphaericus (strain C3-41), this protein is Large ribosomal subunit protein uL30.